The chain runs to 332 residues: Agamous-like MADS-box protein AGL66 (332 aa).

Positions 1–61 (MGRVKLEIKR…DRLSLFSGKT (61 aa)) constitute an MADS-box domain. The stretch at 120–151 (TAINSDVEELEHEVYKLQQQLLMAEEELRKYE) forms a coiled coil.

In terms of assembly, forms a heterodimer with AGL30. In terms of tissue distribution, expressed in pollen.

Its subcellular location is the nucleus. Its function is as follows. Probable transcription factor that forms a heterodimer with the MADS-box protein AGL30 and is involved in the regulation of pollen maturation at the late stages of pollen development and pollen tube growth. In Arabidopsis thaliana (Mouse-ear cress), this protein is Agamous-like MADS-box protein AGL66.